The following is a 381-amino-acid chain: Spermidine/putrescine import ATP-binding protein PotA (381 aa).

Residues 22-252 (VELRNVFKFF…PKTSFVADFI (231 aa)) enclose the ABC transporter domain. Residue 54 to 61 (GPSGCGKT) participates in ATP binding.

Belongs to the ABC transporter superfamily. Spermidine/putrescine importer (TC 3.A.1.11.1) family. In terms of assembly, the complex is composed of two ATP-binding proteins (PotA), two transmembrane proteins (PotB and PotC) and a solute-binding protein (PotD).

It localises to the cell inner membrane. It catalyses the reaction ATP + H2O + polyamine-[polyamine-binding protein]Side 1 = ADP + phosphate + polyamineSide 2 + [polyamine-binding protein]Side 1.. Part of the ABC transporter complex PotABCD involved in spermidine/putrescine import. Responsible for energy coupling to the transport system. This is Spermidine/putrescine import ATP-binding protein PotA from Trichormus variabilis (strain ATCC 29413 / PCC 7937) (Anabaena variabilis).